The chain runs to 1009 residues: UvrABC system protein A (1009 aa).

32–39 (GLSGSGKS) contributes to the ATP binding site. 2 consecutive ABC transporter domains span residues 314 to 592 (WSHG…AESQ) and 612 to 941 (RDPS…KFLR). 645–652 (GVSGSGKS) is a binding site for ATP. The C4-type zinc-finger motif lies at 744–770 (CENCSGDGTIKIEMNFLPDVYVPCEVC). The interval 956–1009 (KAPRKTAARKTAAAKSTTKKTATVRTTNNTATKKAAAVTKKTAPAKKTTRARKA) is disordered. Positions 964–997 (RKTAAAKSTTKKTATVRTTNNTATKKAAAVTKKT) are enriched in low complexity. Residues 998–1009 (APAKKTTRARKA) show a composition bias toward basic residues.

This sequence belongs to the ABC transporter superfamily. UvrA family. In terms of assembly, forms a heterotetramer with UvrB during the search for lesions.

The protein localises to the cytoplasm. Functionally, the UvrABC repair system catalyzes the recognition and processing of DNA lesions. UvrA is an ATPase and a DNA-binding protein. A damage recognition complex composed of 2 UvrA and 2 UvrB subunits scans DNA for abnormalities. When the presence of a lesion has been verified by UvrB, the UvrA molecules dissociate. In Streptomyces avermitilis (strain ATCC 31267 / DSM 46492 / JCM 5070 / NBRC 14893 / NCIMB 12804 / NRRL 8165 / MA-4680), this protein is UvrABC system protein A.